We begin with the raw amino-acid sequence, 566 residues long: Transcription factor tasR (566 aa).

Over residues 1 to 30 (MISASRMEESASSSSLSDAAAPPPGAALQS) the composition is skewed to low complexity. The tract at residues 1–31 (MISASRMEESASSSSLSDAAAPPPGAALQSI) is disordered. Positions 35 to 68 (CDRCRFHKLKCNVPAAGHGGPVPCERCTRAKVPC) form a DNA-binding region, zn(2)-C6 fungal-type. Disordered regions lie at residues 72–174 (RRRR…PGQH), 346–382 (EFIV…GGDD), 422–453 (SESD…TGTA), and 500–551 (RGVG…GLGG). 2 stretches are compositionally biased toward low complexity: residues 89 to 108 (PTRR…TSAA) and 359 to 378 (SESS…NNEA). A compositionally biased stretch (gly residues) spans 501 to 532 (GVGGGGGGGGGGGGGGGGGVGGGGGGGGGPGG).

Its subcellular location is the nucleus. Its function is as follows. Transcription factor that regulates the expression of the gene cluster that mediates the biosynthesis of the tetramic acids Sch210971 and Sch210972, potential anti-HIV fungal natural product that contain a decalin core. The protein is Transcription factor tasR of Hapsidospora irregularis.